A 293-amino-acid polypeptide reads, in one-letter code: Glycine betaine-binding protein OpuAC (293 aa).

The N-terminal stretch at 1-20 (MLKKIIGIGVSAMLALSLAA) is a signal peptide. Cysteine 21 carries N-palmitoyl cysteine lipidation. A lipid anchor (S-diacylglycerol cysteine) is attached at cysteine 21.

As to quaternary structure, the complex is composed of two ATP-binding proteins (OpuAA), two transmembrane proteins (OpuAB) and a solute-binding protein (OpuAC). Interacts with FloT.

Its subcellular location is the cell membrane. It localises to the membrane raft. Functionally, involved in a multicomponent binding-protein-dependent transport system for glycine betaine. The chain is Glycine betaine-binding protein OpuAC (opuAC) from Bacillus subtilis (strain 168).